The sequence spans 28 residues: Antibacterial protein LC3 (28 aa).

Functionally, antibacterial activity against X.campestris, especially strain G, and P.solacearum PO1. This Bacillus subtilis protein is Antibacterial protein LC3.